A 278-amino-acid chain; its full sequence is Thiazole synthase (278 aa).

Residue Lys109 is the Schiff-base intermediate with DXP of the active site. 1-deoxy-D-xylulose 5-phosphate-binding positions include Gly170, 197–198 (AG), and 219–220 (NT).

The protein belongs to the ThiG family. As to quaternary structure, homotetramer. Forms heterodimers with either ThiH or ThiS.

It localises to the cytoplasm. It catalyses the reaction [ThiS sulfur-carrier protein]-C-terminal-Gly-aminoethanethioate + 2-iminoacetate + 1-deoxy-D-xylulose 5-phosphate = [ThiS sulfur-carrier protein]-C-terminal Gly-Gly + 2-[(2R,5Z)-2-carboxy-4-methylthiazol-5(2H)-ylidene]ethyl phosphate + 2 H2O + H(+). It functions in the pathway cofactor biosynthesis; thiamine diphosphate biosynthesis. Its function is as follows. Catalyzes the rearrangement of 1-deoxy-D-xylulose 5-phosphate (DXP) to produce the thiazole phosphate moiety of thiamine. Sulfur is provided by the thiocarboxylate moiety of the carrier protein ThiS. In vitro, sulfur can be provided by H(2)S. The protein is Thiazole synthase of Cupriavidus necator (strain ATCC 17699 / DSM 428 / KCTC 22496 / NCIMB 10442 / H16 / Stanier 337) (Ralstonia eutropha).